The chain runs to 83 residues: Mu-theraphotoxin-Hhn2j 4 (83 aa).

Residues 1 to 21 form the signal peptide; it reads MKASMFLALAGSVLLFVVGYA. Residues 22–48 constitute a propeptide that is removed on maturation; the sequence is SESEEKEFPIELLSKIFAVDVFKGEER. 3 cysteine pairs are disulfide-bonded: C50-C65, C57-C70, and C64-C77. Position 81 is a leucine amide (L81).

It belongs to the neurotoxin 10 (Hwtx-1) family. 15 (Hntx-3) subfamily. In terms of assembly, monomer. In terms of tissue distribution, expressed by the venom gland.

It is found in the secreted. Its function is as follows. Lethal neurotoxin. Selectively blocks tetrodotoxin-sensitive voltage-gated sodium channels (Nav). Does not affect tetrodotoxin-resistant voltage-gated sodium channels or calcium channels. The sequence is that of Mu-theraphotoxin-Hhn2j 4 from Cyriopagopus hainanus (Chinese bird spider).